The primary structure comprises 339 residues: Phenylalanine--tRNA ligase alpha subunit (339 aa).

Residue Glu-262 coordinates Mg(2+).

Belongs to the class-II aminoacyl-tRNA synthetase family. Phe-tRNA synthetase alpha subunit type 1 subfamily. In terms of assembly, tetramer of two alpha and two beta subunits. Requires Mg(2+) as cofactor.

It localises to the cytoplasm. It carries out the reaction tRNA(Phe) + L-phenylalanine + ATP = L-phenylalanyl-tRNA(Phe) + AMP + diphosphate + H(+). In Neisseria gonorrhoeae (strain ATCC 700825 / FA 1090), this protein is Phenylalanine--tRNA ligase alpha subunit.